The chain runs to 382 residues: Heme A synthase (382 aa).

Transmembrane regions (helical) follow at residues 37–57, 126–146, 152–172, 188–208, 231–251, 288–308, and 332–352; these read IRVWLQILFALVFIMIAVGGL, VIGVVWALGFGYFLVRRQVPA, LLFLGLLGGAQGAIGWWMVAS, LATHLGLAFVILGFIAWYIME, STGLLHFTFLQILLGALVAGI, LVQFMHRVTGYVLILFTVVVW, and LQIVLGIVTVLYGAPAHIAIF. Residue His-293 participates in heme binding. Position 353 (His-353) interacts with heme. A helical membrane pass occupies residues 356–376; that stretch reads LAVIVWVLILRARFLSGYPIA.

It belongs to the COX15/CtaA family. Type 2 subfamily. As to quaternary structure, interacts with CtaB. It depends on heme b as a cofactor.

Its subcellular location is the cell membrane. It carries out the reaction Fe(II)-heme o + 2 A + H2O = Fe(II)-heme a + 2 AH2. It participates in porphyrin-containing compound metabolism; heme A biosynthesis; heme A from heme O: step 1/1. Its function is as follows. Catalyzes the conversion of heme O to heme A by two successive hydroxylations of the methyl group at C8. The first hydroxylation forms heme I, the second hydroxylation results in an unstable dihydroxymethyl group, which spontaneously dehydrates, resulting in the formyl group of heme A. The protein is Heme A synthase of Roseobacter denitrificans (strain ATCC 33942 / OCh 114) (Erythrobacter sp. (strain OCh 114)).